Here is a 574-residue protein sequence, read N- to C-terminus: Septation ring formation regulator EzrA (574 aa).

The Extracellular segment spans residues 1-7; the sequence is MSSGIIL. Residues 8-26 form a helical membrane-spanning segment; sequence LLVAIVLLVIIAYVVGVVI. Residues 27–574 lie on the Cytoplasmic side of the membrane; that stretch reads RKRNDTLIAN…YEKTQERIRF (548 aa). Coiled coils occupy residues 104–141, 275–343, and 473–525; these read VRAKHEIDNVDSQLTIIEEDIVSIREALEVLKEQEEKN, LVSL…SAKY, and DIEA…VQKS.

Belongs to the EzrA family.

The protein resides in the cell membrane. In terms of biological role, negative regulator of FtsZ ring formation; modulates the frequency and position of FtsZ ring formation. Inhibits FtsZ ring formation at polar sites. Interacts either with FtsZ or with one of its binding partners to promote depolymerization. This chain is Septation ring formation regulator EzrA, found in Streptococcus agalactiae serotype III (strain NEM316).